We begin with the raw amino-acid sequence, 158 residues long: Endoribonuclease YbeY (158 aa).

Zn(2+) is bound by residues histidine 114, histidine 118, and histidine 124.

This sequence belongs to the endoribonuclease YbeY family. Zn(2+) serves as cofactor.

It localises to the cytoplasm. Single strand-specific metallo-endoribonuclease involved in late-stage 70S ribosome quality control and in maturation of the 3' terminus of the 16S rRNA. The polypeptide is Endoribonuclease YbeY (Pasteurella multocida (strain Pm70)).